The following is a 361-amino-acid chain: Tyrosine--tRNA ligase (361 aa).

Residues tyrosine 36, tyrosine 162, glutamine 166, aspartate 169, and glutamine 184 each coordinate L-tyrosine. A 'KMSKS' region motif is present at residues 236 to 240; the sequence is KMSKS. Lysine 239 serves as a coordination point for ATP.

The protein belongs to the class-I aminoacyl-tRNA synthetase family. TyrS type 4 subfamily. As to quaternary structure, homodimer.

It is found in the cytoplasm. It catalyses the reaction tRNA(Tyr) + L-tyrosine + ATP = L-tyrosyl-tRNA(Tyr) + AMP + diphosphate + H(+). Its function is as follows. Catalyzes the attachment of tyrosine to tRNA(Tyr) in a two-step reaction: tyrosine is first activated by ATP to form Tyr-AMP and then transferred to the acceptor end of tRNA(Tyr). The protein is Tyrosine--tRNA ligase of Saccharolobus islandicus (strain Y.N.15.51 / Yellowstone #2) (Sulfolobus islandicus).